A 276-amino-acid polypeptide reads, in one-letter code: A-factor receptor protein (276 aa).

Residues 8–68 enclose the HTH tetR-type domain; it reads VQTWRSIVDA…AIMDEQTSTV (61 aa). A DNA-binding region (H-T-H motif) is located at residues 31–50; the sequence is AISEILRRAKVTKGALYFHF. Over residues 207–220 the composition is skewed to basic and acidic residues; sequence EKAEREEQEARIAA. The tract at residues 207 to 276 is disordered; that stretch reads EKAEREEQEA…AGVAAGGVVA (70 aa). The span at 221 to 235 shows a compositional bias: low complexity; sequence EAKGAGSDAATDSGS. Residues 236-257 show a composition bias toward gly residues; the sequence is RSGGSGLRGGGSGRGPRAGGAG.

Homodimer or multimer. Binds to both DNA and A-factor as a homodimer.

The protein resides in the cytoplasm. Functionally, represses adpA expression by binding to the promoter region in the absence of A-factor, causing repression of streptomycin production and of sporulation. In Streptomyces griseus, this protein is A-factor receptor protein (arpA).